The primary structure comprises 83 residues: U5-theraphotoxin-Hs1a 5 (83 aa).

The N-terminal stretch at 1–21 (MKTSMFLTLTGLVLLFVVCYA) is a signal peptide. Residues 22-49 (SESEEKEFPKELPSSIFAADSDFKVEER) constitute a propeptide that is removed on maturation. Intrachain disulfides connect cysteine 51–cysteine 63, cysteine 56–cysteine 68, and cysteine 62–cysteine 75.

This sequence belongs to the neurotoxin 10 (Hwtx-1) family. 51 (Hntx-8) subfamily. Hntx-8 sub-subfamily. Expressed by the venom gland.

The protein resides in the secreted. Functionally, agglutinates erythrocytes. The polypeptide is U5-theraphotoxin-Hs1a 5 (Cyriopagopus schmidti (Chinese bird spider)).